The sequence spans 601 residues: Aspartate--tRNA(Asp/Asn) ligase (601 aa).

Glutamate 174 provides a ligand contact to L-aspartate. An aspartate region spans residues 198 to 201 (QLFK). Arginine 220 is a binding site for L-aspartate. ATP-binding positions include 220–222 (RDE) and glutamine 229. Histidine 459 serves as a coordination point for L-aspartate. Residue glutamate 493 participates in ATP binding. Residue arginine 500 coordinates L-aspartate. An ATP-binding site is contributed by 545–548 (GLDR).

The protein belongs to the class-II aminoacyl-tRNA synthetase family. Type 1 subfamily. In terms of assembly, homodimer.

Its subcellular location is the cytoplasm. The enzyme catalyses tRNA(Asx) + L-aspartate + ATP = L-aspartyl-tRNA(Asx) + AMP + diphosphate. Aspartyl-tRNA synthetase with relaxed tRNA specificity since it is able to aspartylate not only its cognate tRNA(Asp) but also tRNA(Asn). Reaction proceeds in two steps: L-aspartate is first activated by ATP to form Asp-AMP and then transferred to the acceptor end of tRNA(Asp/Asn). This chain is Aspartate--tRNA(Asp/Asn) ligase, found in Variovorax paradoxus (strain S110).